The primary structure comprises 360 residues: (+)-6a-hydroxymaackiain 3-O-methyltransferase 1 (360 aa).

Residues 202-205, Asp-226, 226-227, 246-247, and Lys-260 contribute to the S-adenosyl-L-methionine site; these read VAGG, DQ, and DM. The active-site Proton acceptor is the His-264.

The protein belongs to the class I-like SAM-binding methyltransferase superfamily. Cation-independent O-methyltransferase family. COMT subfamily.

It catalyses the reaction (+)-6a-hydroxymaackiain + S-adenosyl-L-methionine = (+)-pisatin + S-adenosyl-L-homocysteine + H(+). It carries out the reaction a 4'-hydroxyisoflavone + S-adenosyl-L-methionine = a 4'-methoxyisoflavone + S-adenosyl-L-homocysteine + H(+). Its function is as follows. Methyltransferase involved in the phytoalexin pisatin biosynthesis. Has both 3- and 4'-O-methyltransferase activities. Can use (+)-6a-hydroxymaackiain, 2,7,4'-trihydroxyisoflavanone and with much less activity (+)-medicarpin as substrates, but not (-)-6a-hydroxymaackiain, daidzein, formononetin or isoliquiritigenin. May be involved in formononetin biosynthesis. The protein is (+)-6a-hydroxymaackiain 3-O-methyltransferase 1 (HMM1) of Pisum sativum (Garden pea).